The primary structure comprises 205 residues: LexA repressor (205 aa).

Positions 28–48 form a DNA-binding region, H-T-H motif; that stretch reads IRDIMKHFNFKSPRAAHKHLI. Residues Ser-125 and Lys-163 each act as for autocatalytic cleavage activity in the active site.

This sequence belongs to the peptidase S24 family. As to quaternary structure, homodimer.

It carries out the reaction Hydrolysis of Ala-|-Gly bond in repressor LexA.. Functionally, represses a number of genes involved in the response to DNA damage (SOS response), including recA and lexA. In the presence of single-stranded DNA, RecA interacts with LexA causing an autocatalytic cleavage which disrupts the DNA-binding part of LexA, leading to derepression of the SOS regulon and eventually DNA repair. The protein is LexA repressor of Petrotoga mobilis (strain DSM 10674 / SJ95).